A 61-amino-acid polypeptide reads, in one-letter code: Protein YncO (61 aa).

Residues 18–38 traverse the membrane as a helical segment; it reads HVFLYVFYIFLFLVLFIMTIY.

Its subcellular location is the cell inner membrane. This Escherichia coli (strain K12) protein is Protein YncO.